Reading from the N-terminus, the 25-residue chain is Antimicrobial peptide 2 (25 aa).

In terms of tissue distribution, expressed by the skin glands.

It is found in the secreted. Its function is as follows. Has very strong antibacterial activity against Gram-positive bacterium S.aureus and very weak activity against Gram-negative bacterium E.coli. The sequence is that of Antimicrobial peptide 2 from Xenopus tropicalis (Western clawed frog).